The following is a 393-amino-acid chain: Myb-related transcription factor, partner of profilin (393 aa).

The segment covering 1–11 (MASATAAAAPG) has biased composition (low complexity). Positions 1–21 (MASATAAAAPGEAEETTRLRK) are disordered. A Myb-like domain is found at 16 to 88 (TTRLRKPRFS…EVQKRWNDFK (73 aa)). The Nuclear localization signal signature appears at 87 to 90 (FKRR). 3 disordered regions span residues 125-254 (GPGV…EQSL), 290-323 (PLLP…APKV), and 348-393 (IISP…WKSP). Residues 142 to 157 (AAASSQPQASTASTQR) are compositionally biased toward low complexity. Basic and acidic residues predominate over residues 160-171 (LSEDRRQDRRAD). The segment covering 173–184 (PAQSKGGSSSPE) has biased composition (polar residues). Composition is skewed to pro residues over residues 219–229 (PPLPAPPPPPT), 238–247 (SPSPTPPRPT), 296–320 (PADP…PPSA), and 359–368 (KPLPPAPPLP). Residues 375 to 393 (HKRRKGFPTRKRRGRWKSP) are compositionally biased toward basic residues. Short sequence motifs (nuclear localization signal) lie at residues 376 to 379 (KRRK) and 384 to 387 (RKRR).

Interacts with PFN1. Homodimer and heterodimer with PFN1. In terms of tissue distribution, ubiquitous. Highly expressed in brain, liver and testis. Moderate expression in heart, lung and skeletal muscle. Low expression in spleen and kidney.

The protein resides in the nucleus. In terms of biological role, transcriptional repressor; DNA-binding protein that specifically recognizes the core sequence 5'-YAAC[GT]G-3'. Dimerization with PFN1 reduces its DNA-binding capacity. This Mus musculus (Mouse) protein is Myb-related transcription factor, partner of profilin (Mypop).